Consider the following 361-residue polypeptide: Phospho-N-acetylmuramoyl-pentapeptide-transferase (361 aa).

The next 10 helical transmembrane spans lie at 21 to 41 (YLTV…LWIG), 74 to 94 (MGGI…ANLA), 97 to 117 (YVWF…VDDY), 132 to 152 (WKYF…YAIG), 168 to 188 (VMPQ…VGTG), 199 to 219 (GLAI…AWAT), 239 to 259 (LVIF…FNTY), 264 to 284 (FMGD…AVLV), 288 to 308 (FLLV…ILQV), and 339 to 359 (VIIR…ITLK).

Belongs to the glycosyltransferase 4 family. MraY subfamily. It depends on Mg(2+) as a cofactor.

It is found in the cell inner membrane. The enzyme catalyses UDP-N-acetyl-alpha-D-muramoyl-L-alanyl-gamma-D-glutamyl-meso-2,6-diaminopimeloyl-D-alanyl-D-alanine + di-trans,octa-cis-undecaprenyl phosphate = di-trans,octa-cis-undecaprenyl diphospho-N-acetyl-alpha-D-muramoyl-L-alanyl-D-glutamyl-meso-2,6-diaminopimeloyl-D-alanyl-D-alanine + UMP. It participates in cell wall biogenesis; peptidoglycan biosynthesis. Functionally, catalyzes the initial step of the lipid cycle reactions in the biosynthesis of the cell wall peptidoglycan: transfers peptidoglycan precursor phospho-MurNAc-pentapeptide from UDP-MurNAc-pentapeptide onto the lipid carrier undecaprenyl phosphate, yielding undecaprenyl-pyrophosphoryl-MurNAc-pentapeptide, known as lipid I. This Histophilus somni (strain 129Pt) (Haemophilus somnus) protein is Phospho-N-acetylmuramoyl-pentapeptide-transferase.